The primary structure comprises 178 residues: Oligoribonuclease (178 aa).

In terms of domain architecture, Exonuclease spans Leu-7–Leu-168. Residue Tyr-128 is part of the active site.

Belongs to the oligoribonuclease family.

The protein resides in the cytoplasm. Its function is as follows. 3'-to-5' exoribonuclease specific for small oligoribonucleotides. The protein is Oligoribonuclease of Francisella tularensis subsp. holarctica (strain FTNF002-00 / FTA).